Consider the following 61-residue polypeptide: MAKKSMIVKANRAPKFSTQGYNRCKRCGRPRAYMRKFGICRICFRELASQGLIPGVTKSSW.

Residues Cys24, Cys27, Cys40, and Cys43 each coordinate Zn(2+).

It belongs to the universal ribosomal protein uS14 family. Zinc-binding uS14 subfamily. As to quaternary structure, part of the 30S ribosomal subunit. Contacts proteins S3 and S10. The cofactor is Zn(2+).

Functionally, binds 16S rRNA, required for the assembly of 30S particles and may also be responsible for determining the conformation of the 16S rRNA at the A site. The sequence is that of Small ribosomal subunit protein uS14 from Herpetosiphon aurantiacus (strain ATCC 23779 / DSM 785 / 114-95).